Reading from the N-terminus, the 92-residue chain is Elongation factor 1-beta (92 aa).

It belongs to the EF-1-beta/EF-1-delta family.

Functionally, promotes the exchange of GDP for GTP in EF-1-alpha/GDP, thus allowing the regeneration of EF-1-alpha/GTP that could then be used to form the ternary complex EF-1-alpha/GTP/AAtRNA. This chain is Elongation factor 1-beta (ef1b), found in Pyrobaculum aerophilum (strain ATCC 51768 / DSM 7523 / JCM 9630 / CIP 104966 / NBRC 100827 / IM2).